Consider the following 698-residue polypeptide: Pheromone-regulated protein PRM7 (698 aa).

4 disordered regions span residues 1 to 65 (MYRT…IGNS), 133 to 183 (ESTT…SAVT), 197 to 274 (SVDQ…TVTI), and 455 to 480 (SASS…DSKT). Low complexity-rich tracts occupy residues 9 to 56 (EVTT…TTSA) and 158 to 183 (VTTS…SAVT). Over residues 455 to 465 (SASSSRSSATS) the composition is skewed to low complexity.

The sequence is that of Pheromone-regulated protein PRM7 (PRM7) from Saccharomyces cerevisiae (strain ATCC 204508 / S288c) (Baker's yeast).